The chain runs to 1098 residues: MALIVASLFLPYQPQFELDTSLPENSQVDSSLVNIQAMANDQQQQRALSNNISQESLVAPAPEQGVPPAISRSATRSPSAFNRASSTTNTATLDDLVSSDIFMENLTANATTSHTPTSKTMLKPRKNGSVERFFSPSSNIPTDRIASPIQHEHDSGSRIASPIQQQQQDPTTNLLKNVNKSLLVHSLLNNTSQTSLEGPNNHIVTPKSRAGNRPTSAATSLVNRTKQGSASSGSSGSSAPPSIKRITPHLTASAAKQRPLLAKQPSNLKYSELADISSSETSSQHNESDPDDLTTAPDEEYVSDLEMDDAKQDYKVPKFGGYSNKSKLKKYALLRSSQELFSRLPWSIVPSIKGNGAMKNAINTAVLENIIPHRHVKWVGTVGIPTDEIPENILANISDSLKDKYDSYPVLTDDDTFKAAYKNYCKQILWPTLHYQIPDNPNSKAFEDHSWKFYRNLNQRFADAIVKIYKKGDTIWIHDYHLMLVPQMVRDVLPFAKIGFTLHVSFPSSEVFRCLAQREKILEGLTGADFVGFQTREYARHFLQTSNRLLMADVVHDEELKYNGRVVSVRFTPVGIDAFDLQSQLKDGSVMQWRQLIRERWQGKKLIVCRDQFDRIRGIHKKLLAYEKFLVENPEYVEKSTLIQICIGSSKDVELERQIMIVVDRINSLSTNISISQPVVFLHQDLDFSQYLALSSEADLFVVSSLREGMNLTCHEFIVCSEDKNAPLLLSEFTGSASLLNDGAIIINPWDTKNFSQAILKGLEMPFDKRRPQWKKLMKDIINNDSTNWIKTSLQDIHISWQFNQEGSKIFKLNTKTLMEDYQSSKKRMFVFNIAEPPSSRMISILNDMTSKGNIVYIMNSFPKPILENLYSRVQNIGLIAENGAYVSLNGVWYNIVDQVDWRNDVAKILEDKVERLPGSYYKINESMIKFHTENAEDQDRVASVIGDAITHINTVFDHRGIHAYVYKNVVSVQQVGLSLSAAQFLFRFYNSASDPLDTSSGQITNIQTPSQQNPSDQEQQPPASPTVSMNHIDFACVSGSSSPVLEPLFKLVNDEASEGQVKAGHAIVYGDATSTYAKEHVNGLNELFTIISRIIED.

Serine 49, serine 53, serine 56, serine 71, serine 77, serine 135, serine 147, and serine 161 each carry phosphoserine. Disordered regions lie at residues 59 to 86 (APAP…RASS), 129 to 168 (SVER…QQQQ), and 192 to 244 (SQTS…PSIK). Over residues 72-86 (RSATRSPSAFNRASS) the composition is skewed to polar residues. 2 tandem repeats follow at residues 144 to 150 (RIASPIQ) and 158 to 164 (RIASPIQ). Positions 144-164 (RIASPIQHEHDSGSRIASPIQ) are 2 X 7 AA repeats of R-I-A-S-P-I-Q. Residues 213–227 (RPTSAATSLVNRTKQ) show a composition bias toward polar residues. Over residues 228 to 242 (GSASSGSSGSSAPPS) the composition is skewed to low complexity. Phosphoserine is present on serine 229. Threonine 251 carries the post-translational modification Phosphothreonine. The interval 274 to 297 (ADISSSETSSQHNESDPDDLTTAP) is disordered. Residue serine 303 is modified to Phosphoserine. The segment at 320–812 (GGYSNKSKLK…FNQEGSKIFK (493 aa)) is TPS complex domain. Threonine 815 carries the post-translational modification Phosphothreonine. The segment at 1000–1027 (SSGQITNIQTPSQQNPSDQEQQPPASPT) is disordered.

This sequence in the C-terminal section; belongs to the glycosyltransferase 20 family. As to quaternary structure, the trehalose synthase complex is composed of the two catalytic subunits TPS1 and TPS2, and at least one of the two regulatory subunits TPS3 or TSL1.

The protein localises to the cytoplasm. Regulatory subunit of the trehalose synthase complex that catalyzes the production of trehalose from glucose-6-phosphate and UDP-glucose in a two step process. May stabilize the trehalose synthase complex, and confer sensitivity to physiological concentrations of phosphate and to fructose 6-phosphate. The polypeptide is Trehalose synthase complex regulatory subunit TSL1 (TSL1) (Saccharomyces cerevisiae (strain ATCC 204508 / S288c) (Baker's yeast)).